The primary structure comprises 468 residues: MKFTHLFFIGLLTKVYTETVTVLSTRSYRLATTESTPTDGTVYLTLTRQQSSSTSLNASTITTPPSNSSASVQTTAVTDCHFHNSVQYCVDGYGNEGSILPVPTNTNNLPTSYDGCHSHDGDTFCMDGDKEVQFVKLEDEDDEESSSSSGKKCHFHAGVEHCVDDNNHDAVTCERVKRDYDIPLRIGLLFVILVTSGIGSFGPIVLKQFVNLSQENYIIVIIKQFGTGIIISTAFVHLMTHAQLMWSNSCLKIKYEGTGASITMAGIFIAFIIEYIALRIVNARDTGKVDKKEIEETSSNEQSLHGISVNDKISVMILEAGIIFHSILIGITLVVTDDVYFITLFIVIVFHQFFEGLALSSRIISITNASLSTKLVMALMFALITPIGMAIGIGVLNKFNGNDPSTLIALGTLDSFSAGVLLWTGLIEMWSHDWLHGHLRNSSFVKTTVALVSLILGMLLMSLLGNWA.

An N-terminal signal peptide occupies residues 1–17 (MKFTHLFFIGLLTKVYT). The Extracellular segment spans residues 18–185 (ETVTVLSTRS…VKRDYDIPLR (168 aa)). N-linked (GlcNAc...) asparagine glycosylation is found at Asn-57 and Asn-67. Residues 186 to 206 (IGLLFVILVTSGIGSFGPIVL) traverse the membrane as a helical segment. Residues 207–217 (KQFVNLSQENY) are Cytoplasmic-facing. A helical membrane pass occupies residues 218–238 (IIVIIKQFGTGIIISTAFVHL). At 239 to 257 (MTHAQLMWSNSCLKIKYEG) the chain is on the extracellular side. Residues 258 to 278 (TGASITMAGIFIAFIIEYIAL) traverse the membrane as a helical segment. The Cytoplasmic segment spans residues 279–314 (RIVNARDTGKVDKKEIEETSSNEQSLHGISVNDKIS). Residues 315–335 (VMILEAGIIFHSILIGITLVV) traverse the membrane as a helical segment. Topologically, residues 336 to 338 (TDD) are extracellular. Residues 339–359 (VYFITLFIVIVFHQFFEGLAL) form a helical membrane-spanning segment. The Cytoplasmic portion of the chain corresponds to 360 to 374 (SSRIISITNASLSTK). Residues 375-395 (LVMALMFALITPIGMAIGIGV) form a helical membrane-spanning segment. The Extracellular portion of the chain corresponds to 396 to 406 (LNKFNGNDPST). The helical transmembrane segment at 407 to 427 (LIALGTLDSFSAGVLLWTGLI) threads the bilayer. Over 428-447 (EMWSHDWLHGHLRNSSFVKT) the chain is Cytoplasmic. A helical membrane pass occupies residues 448 to 468 (TVALVSLILGMLLMSLLGNWA).

Belongs to the ZIP transporter (TC 2.A.5) family.

It is found in the cell membrane. It carries out the reaction Zn(2+)(in) = Zn(2+)(out). In terms of biological role, zinc transporter that acts with PRA1 in sequestration of zinc from host tissues during infection. The pH-regulated antigen 1 (PRA1) binds zinc from its environment and then reassociates with ZRT1 to acquire this essential metal. The chain is Zinc-regulated transporter 1 (ZRT101) from Candida albicans (strain SC5314 / ATCC MYA-2876) (Yeast).